Consider the following 157-residue polypeptide: SsrA-binding protein (157 aa).

The protein belongs to the SmpB family.

Its subcellular location is the cytoplasm. In terms of biological role, required for rescue of stalled ribosomes mediated by trans-translation. Binds to transfer-messenger RNA (tmRNA), required for stable association of tmRNA with ribosomes. tmRNA and SmpB together mimic tRNA shape, replacing the anticodon stem-loop with SmpB. tmRNA is encoded by the ssrA gene; the 2 termini fold to resemble tRNA(Ala) and it encodes a 'tag peptide', a short internal open reading frame. During trans-translation Ala-aminoacylated tmRNA acts like a tRNA, entering the A-site of stalled ribosomes, displacing the stalled mRNA. The ribosome then switches to translate the ORF on the tmRNA; the nascent peptide is terminated with the 'tag peptide' encoded by the tmRNA and targeted for degradation. The ribosome is freed to recommence translation, which seems to be the essential function of trans-translation. The polypeptide is SsrA-binding protein (Clostridium kluyveri (strain NBRC 12016)).